The following is a 304-amino-acid chain: ATP synthase gamma chain (304 aa).

The protein belongs to the ATPase gamma chain family. F-type ATPases have 2 components, CF(1) - the catalytic core - and CF(0) - the membrane proton channel. CF(1) has five subunits: alpha(3), beta(3), gamma(1), delta(1), epsilon(1). CF(0) has three main subunits: a, b and c.

The protein resides in the cell membrane. Functionally, produces ATP from ADP in the presence of a proton gradient across the membrane. The gamma chain is believed to be important in regulating ATPase activity and the flow of protons through the CF(0) complex. The polypeptide is ATP synthase gamma chain (Mycobacterium marinum (strain ATCC BAA-535 / M)).